The primary structure comprises 101 residues: Integration host factor subunit alpha (101 aa).

Belongs to the bacterial histone-like protein family. Heterodimer of an alpha and a beta chain.

This protein is one of the two subunits of integration host factor, a specific DNA-binding protein that functions in genetic recombination as well as in transcriptional and translational control. The chain is Integration host factor subunit alpha from Saccharophagus degradans (strain 2-40 / ATCC 43961 / DSM 17024).